The chain runs to 229 residues: CRISPR pre-crRNA endoribonuclease Cas5d (229 aa).

This sequence belongs to the CRISPR-associated protein Cas5 family. Subtype I-C/Dvulg subfamily. Does not require a metal cofactor. is required as a cofactor.

Its function is as follows. CRISPR (clustered regularly interspaced short palindromic repeat) is an adaptive immune system that provides protection against mobile genetic elements (viruses, transposable elements and conjugative plasmids). CRISPR clusters contain spacers, sequences complementary to antecedent mobile elements, and target invading nucleic acids. CRISPR clusters are transcribed and processed into CRISPR RNA (crRNA). This protein is a sequence-specific endonuclease that cleaves pre-crRNA into mature crRNA, possibly by an intramolecular attack of the 2'-hydroxyl group of G26 on the scissile phosphodiester, cutting the precursor 3' to G26 residue yielding 5'-hydroxyl and 2' and/or 3' ends lacking a hydroxyl group (perhaps a 2'/3' cyclic phosphodiester). Requires between 4 and 8 nt downstream of the cleavage site for both binding and cleavage of pre-crRNA. Substitution with dG at this position abolishes cleavage but not RNA binding. Does not cleave pre-crRNA associated with the M.succiniciproducens strain MBEL55E Cas5 protein (AC Q65TW5) CRISPR locus. This Thermus thermophilus (strain ATCC BAA-163 / DSM 7039 / HB27) protein is CRISPR pre-crRNA endoribonuclease Cas5d.